A 599-amino-acid polypeptide reads, in one-letter code: Elongation factor 4 (599 aa).

The region spanning 2–184 (KHIRNFSIIA…RLVRDIPPPE (183 aa)) is the tr-type G domain. GTP contacts are provided by residues 14-19 (DHGKST) and 131-134 (NKID).

This sequence belongs to the TRAFAC class translation factor GTPase superfamily. Classic translation factor GTPase family. LepA subfamily.

Its subcellular location is the cell inner membrane. The enzyme catalyses GTP + H2O = GDP + phosphate + H(+). In terms of biological role, required for accurate and efficient protein synthesis under certain stress conditions. May act as a fidelity factor of the translation reaction, by catalyzing a one-codon backward translocation of tRNAs on improperly translocated ribosomes. Back-translocation proceeds from a post-translocation (POST) complex to a pre-translocation (PRE) complex, thus giving elongation factor G a second chance to translocate the tRNAs correctly. Binds to ribosomes in a GTP-dependent manner. The chain is Elongation factor 4 from Pectobacterium carotovorum subsp. carotovorum (strain PC1).